An 88-amino-acid polypeptide reads, in one-letter code: Adenylosuccinate lyase (88 aa).

N(6)-(1,2-dicarboxyethyl)-AMP is bound by residues 4 to 5 (RY) and 67 to 69 (KHD).

The protein belongs to the lyase 1 family. Adenylosuccinate lyase subfamily. As to quaternary structure, homotetramer and homodimer. Residues from neighboring subunits contribute catalytic and substrate-binding residues to each active site.

It carries out the reaction N(6)-(1,2-dicarboxyethyl)-AMP = fumarate + AMP. The catalysed reaction is (2S)-2-[5-amino-1-(5-phospho-beta-D-ribosyl)imidazole-4-carboxamido]succinate = 5-amino-1-(5-phospho-beta-D-ribosyl)imidazole-4-carboxamide + fumarate. The protein operates within purine metabolism; AMP biosynthesis via de novo pathway; AMP from IMP: step 2/2. Its pathway is purine metabolism; IMP biosynthesis via de novo pathway; 5-amino-1-(5-phospho-D-ribosyl)imidazole-4-carboxamide from 5-amino-1-(5-phospho-D-ribosyl)imidazole-4-carboxylate: step 2/2. Functionally, catalyzes two reactions in de novo purine nucleotide biosynthesis. Catalyzes the breakdown of 5-aminoimidazole- (N-succinylocarboxamide) ribotide (SAICAR or 2-[5-amino-1-(5-phospho-beta-D-ribosyl)imidazole-4-carboxamido]succinate) to 5-aminoimidazole-4-carboxamide ribotide (AICAR or 5-amino-1-(5-phospho-beta-D-ribosyl)imidazole-4-carboxamide) and fumarate, and of adenylosuccinate (ADS or N(6)-(1,2-dicarboxyethyl)-AMP) to adenosine monophosphate (AMP) and fumarate. This chain is Adenylosuccinate lyase (purB), found in Spiroplasma citri.